The chain runs to 389 residues: MGQNLSTSNPLGFFPEHQLDPAFKANTNNPDWDFNPKKDYWPEATKVGAGAFGPGFTPPHGGLLGLSPQAQGILTTLPANPPPASTNRQSGRQPTPLSPPLRDTHPQAMQWNSTTFHQALQDPRVRGLYFPAGGSSSGTLNPVPNTASHISSVFSTTGDPAPNMENITSGFLGPLLVLQAGFFLLTKILTIPQSLDSWWTSLNFLGGAPVCLGQNSQSPTSNHSPTSCPPICPGYRWMCLRRFIIFLFILLLCLIFLLVLLDYQGMLPVCPLIPGSSTTSTGPCKTCTTPAQGTSLIPSCCCTKPSDGNCTCIPIPSSWAFAKFLWEWASVRFSWLSLLAPFVQWFAGLSPTVWLLAIWMMWYWGPNLYNILSPFIPLLPIFFCLWVYI.

An N-acetylmethionine modification is found at M1. G2 carries N-myristoyl glycine; by host lipidation. The tract at residues 2–108 is pre-S1; that stretch reads GQNLSTSNPL…PPLRDTHPQA (107 aa). Positions 2-163 are pre-S; sequence GQNLSTSNPL…FSTTGDPAPN (162 aa). At 2 to 170 the chain is on the virion surface; in external conformation side; sequence GQNLSTSNPL…APNMENITSG (169 aa). Over 2-242 the chain is Intravirion; in internal conformation; sequence GQNLSTSNPL…PGYRWMCLRR (241 aa). Residues 75–107 are disordered; the sequence is TTLPANPPPASTNRQSGRQPTPLSPPLRDTHPQ. The span at 85–95 shows a compositional bias: polar residues; it reads STNRQSGRQPT. A pre-S2 region spans residues 109–163; it reads MQWNSTTFHQALQDPRVRGLYFPAGGSSSGTLNPVPNTASHISSVFSTTGDPAPN. Residues 171 to 191 traverse the membrane as a helical segment; sequence FLGPLLVLQAGFFLLTKILTI. Residues 192-242 lie on the Intravirion; in external conformation side of the membrane; it reads PQSLDSWWTSLNFLGGAPVCLGQNSQSPTSNHSPTSCPPICPGYRWMCLRR. Residues 243–263 form a helical membrane-spanning segment; the sequence is FIIFLFILLLCLIFLLVLLDY. At 264-337 the chain is on the virion surface side; that stretch reads QGMLPVCPLI…WASVRFSWLS (74 aa). A glycan (N-linked (GlcNAc...) asparagine; by host) is linked at N309. A helical membrane pass occupies residues 338-358; that stretch reads LLAPFVQWFAGLSPTVWLLAI. Topologically, residues 359–364 are intravirion; it reads WMMWYW. A helical membrane pass occupies residues 365–387; sequence GPNLYNILSPFIPLLPIFFCLWV. The Virion surface segment spans residues 388–389; sequence YI.

This sequence belongs to the orthohepadnavirus major surface antigen family. In terms of assembly, in its internal form (Li-HBsAg), interacts with the capsid protein and with the isoform S. Interacts with host chaperone CANX. Associates with host chaperone CANX through its pre-S2 N glycan; this association may be essential for isoform M proper secretion. As to quaternary structure, interacts with isoform L. Interacts with the antigens of satellite virus HDV (HDVAgs); this interaction is required for encapsidation of HDV genomic RNA. Isoform M is N-terminally acetylated by host at a ratio of 90%, and N-glycosylated by host at the pre-S2 region. In terms of processing, myristoylated.

Its subcellular location is the virion membrane. In terms of biological role, the large envelope protein exists in two topological conformations, one which is termed 'external' or Le-HBsAg and the other 'internal' or Li-HBsAg. In its external conformation the protein attaches the virus to cell receptors and thereby initiating infection. This interaction determines the species specificity and liver tropism. This attachment induces virion internalization predominantly through caveolin-mediated endocytosis. The large envelope protein also assures fusion between virion membrane and endosomal membrane. In its internal conformation the protein plays a role in virion morphogenesis and mediates the contact with the nucleocapsid like a matrix protein. Its function is as follows. The middle envelope protein plays an important role in the budding of the virion. It is involved in the induction of budding in a nucleocapsid independent way. In this process the majority of envelope proteins bud to form subviral lipoprotein particles of 22 nm of diameter that do not contain a nucleocapsid. This is Large envelope protein from Pan troglodytes (Chimpanzee).